Here is a 377-residue protein sequence, read N- to C-terminus: DNA dC-&gt;dU-editing enzyme APOBEC-3G (377 aa).

Residues 1-60 (MNPQIRNMVEQMEPDIFVYYFNNRPILSGRNTVWLCYEVKTKDPSGPPLDANIFQGKLYP) form an essential for cytoplasmic localization region. CMP/dCMP-type deaminase domains lie at 29–138 (GRNT…LRIL) and 214–327 (GQRE…LRTL). Phosphothreonine; by PKA is present on Thr-32. 3 residues coordinate Zn(2+): His-65, Cys-97, and Cys-100. The tract at residues 209-335 (KPWVSGQRET…TLHRDGAKIA (127 aa)) is necessary for homooligomerization. The tract at residues 213-215 (SGQ) is interaction with DNA. Position 218 is a phosphothreonine; by PKA and CAMK2 (Thr-218). His-257 lines the Zn(2+) pocket. The active-site Proton donor is the Glu-259. Cys-287 and Cys-290 together coordinate Zn(2+). The interaction with DNA stretch occupies residues 312–319 (RIYDDQGR).

The protein belongs to the cytidine and deoxycytidylate deaminase family. Homodimer. Homooligomer. Can bind RNA to form ribonucleoprotein complexes of high-molecular-mass (HMM) or low-molecular-mass (LMM). HMM is inactive and heterogeneous in protein composition because of binding nonselectively to cellular RNAs, which in turn are associated with variety of cellular proteins. The LMM form which is enzymatically active has few or no RNAs associated. Its ability to form homooligomer is distinct from its ability to assemble into HMM. Interacts with APOBEC3B, APOBEC3F, MOV10, AGO2, EIF4E, EIF4ENIF1, DCP2 and DDX6 in an RNA-dependent manner. Interacts with AGO1, AGO3 and PKA/PRKACA. It depends on Zn(2+) as a cofactor.

It localises to the cytoplasm. It is found in the nucleus. The protein localises to the P-body. It carries out the reaction a 2'-deoxycytidine in single-stranded DNA + H2O + H(+) = a 2'-deoxyuridine in single-stranded DNA + NH4(+). Functionally, DNA deaminase (cytidine deaminase) which acts as an inhibitor of retrovirus replication and retrotransposon mobility via deaminase-dependent and -independent mechanisms. Exhibits antiviral activity against vif-deficient: HIV-1 and simian immunodeficiency viruses (SIVs) and also simian foamy virus (SFV). After the penetration of retroviral nucleocapsids into target cells of infection and the initiation of reverse transcription, it can induce the conversion of cytosine to uracil in the minus-sense single-strand viral DNA, leading to G-to-A hypermutations in the subsequent plus-strand viral DNA. The resultant detrimental levels of mutations in the proviral genome, along with a deamination-independent mechanism that works prior to the proviral integration, together exert efficient antiretroviral effects in infected target cells. Selectively targets single-stranded DNA and does not deaminate double-stranded DNA or single- or double-stranded RNA. May inhibit the mobility of LTR retrotransposons. In Chlorocebus aethiops (Green monkey), this protein is DNA dC-&gt;dU-editing enzyme APOBEC-3G (APOBEC3G).